The primary structure comprises 133 residues: UPF0146 protein MTH_1000 (133 aa).

This sequence belongs to the UPF0146 family.

This chain is UPF0146 protein MTH_1000, found in Methanothermobacter thermautotrophicus (strain ATCC 29096 / DSM 1053 / JCM 10044 / NBRC 100330 / Delta H) (Methanobacterium thermoautotrophicum).